Here is a 127-residue protein sequence, read N- to C-terminus: Prophage antitermination protein Q homolog QuuD (127 aa).

Belongs to the phage antitermination Q type 1 family.

In terms of biological role, positively regulate expression of some phage genes. Bacterial host RNA polymerase modified by antitermination proteins transcribes through termination sites that otherwise prevent expression of the regulated genes. This Escherichia coli (strain K12) protein is Prophage antitermination protein Q homolog QuuD (quuD).